Here is a 307-residue protein sequence, read N- to C-terminus: Fructose-bisphosphate aldolase (307 aa).

Ser49 serves as a coordination point for D-glyceraldehyde 3-phosphate. Asp82 functions as the Proton donor in the catalytic mechanism. Zn(2+) contacts are provided by His83, Asp104, Glu134, and His180. Gly181 provides a ligand contact to dihydroxyacetone phosphate. Position 210 (His210) interacts with Zn(2+). Dihydroxyacetone phosphate contacts are provided by residues 211–213 and 253–256; these read GAS and NTDT.

It belongs to the class II fructose-bisphosphate aldolase family. In terms of assembly, homodimer. Zn(2+) serves as cofactor.

The enzyme catalyses beta-D-fructose 1,6-bisphosphate = D-glyceraldehyde 3-phosphate + dihydroxyacetone phosphate. The protein operates within carbohydrate degradation; glycolysis; D-glyceraldehyde 3-phosphate and glycerone phosphate from D-glucose: step 4/4. Its function is as follows. Catalyzes the aldol condensation of dihydroxyacetone phosphate (DHAP or glycerone-phosphate) with glyceraldehyde 3-phosphate (G3P) to form fructose 1,6-bisphosphate (FBP) in gluconeogenesis and the reverse reaction in glycolysis. The protein is Fructose-bisphosphate aldolase (fba) of Helicobacter pylori (strain J99 / ATCC 700824) (Campylobacter pylori J99).